We begin with the raw amino-acid sequence, 356 residues long: Protein pelota homolog (356 aa).

Belongs to the eukaryotic release factor 1 family. Pelota subfamily. In terms of assembly, monomer. A divalent metal cation serves as cofactor.

It localises to the cytoplasm. In terms of biological role, may function in recognizing stalled ribosomes, interact with stem-loop structures in stalled mRNA molecules, and effect endonucleolytic cleavage of the mRNA. May play a role in the release non-functional ribosomes and degradation of damaged mRNAs. Has endoribonuclease activity. This chain is Protein pelota homolog, found in Pyrococcus furiosus (strain ATCC 43587 / DSM 3638 / JCM 8422 / Vc1).